The following is a 178-amino-acid chain: Large ribosomal subunit protein eL20w (178 aa).

The protein belongs to the eukaryotic ribosomal protein eL20 family.

This Arabidopsis thaliana (Mouse-ear cress) protein is Large ribosomal subunit protein eL20w (RPL18AD).